A 281-amino-acid polypeptide reads, in one-letter code: Large ribosomal subunit protein uL2 (281 aa).

The interval 210–281 is disordered; it reads RTRYAGQRPH…RGRKRGPHTR (72 aa). Residues 254-281 show a composition bias toward basic residues; that stretch reads TVGKKTRSHKARSNKFIVRGRKRGPHTR.

The protein belongs to the universal ribosomal protein uL2 family. As to quaternary structure, part of the 50S ribosomal subunit. Forms a bridge to the 30S subunit in the 70S ribosome.

Functionally, one of the primary rRNA binding proteins. Required for association of the 30S and 50S subunits to form the 70S ribosome, for tRNA binding and peptide bond formation. It has been suggested to have peptidyltransferase activity; this is somewhat controversial. Makes several contacts with the 16S rRNA in the 70S ribosome. This Limosilactobacillus reuteri subsp. reuteri (strain JCM 1112) (Lactobacillus reuteri) protein is Large ribosomal subunit protein uL2.